A 329-amino-acid polypeptide reads, in one-letter code: BTB/POZ domain-containing adapter for CUL3-mediated RhoA degradation protein 1 (329 aa).

Residues 1-22 are compositionally biased toward low complexity; the sequence is MSAEASGPAAAAAPSLEAPKPS. Residues 1-31 form a disordered region; it reads MSAEASGPAAAAAPSLEAPKPSGLEPGPAAY. Residues 41-109 enclose the BTB domain; the sequence is KYVKLNVGGS…LRDGSVPLPE (69 aa). Positions 282-303 are disordered; that stretch reads ATGGAAGAGGAGRGEDEENREH.

Belongs to the BACURD family. Homotetramer; forms a two-fold symmetric tetramer in solution. Interacts with CUL3; interaction is direct and forms a 5:5 heterodecamer. Component of the BCR(KCTD13) E3 ubiquitin ligase complex, at least composed of CUL3, KCTD13/BACURD1 and RBX1. Interacts with RHOA; with a preference for RhoA-GDP. Interacts with POLD2 and PCNA. Interacts with SPRTN. As to expression, expressed in a wide variety of tissues.

It is found in the nucleus. It functions in the pathway protein modification; protein ubiquitination. Substrate-specific adapter of a BCR (BTB-CUL3-RBX1) E3 ubiquitin-protein ligase complex required for synaptic transmission. The BCR(KCTD13) E3 ubiquitin ligase complex mediates the ubiquitination of RHOA, leading to its degradation by the proteasome Degradation of RHOA regulates the actin cytoskeleton and promotes synaptic transmission. This chain is BTB/POZ domain-containing adapter for CUL3-mediated RhoA degradation protein 1 (KCTD13), found in Homo sapiens (Human).